Here is a 741-residue protein sequence, read N- to C-terminus: 2-5A-dependent ribonuclease (741 aa).

Residues 1 to 21 are disordered; that stretch reads MESRDHNNPQEGPTSSSGRRA. The span at 9–18 shows a compositional bias: polar residues; it reads PQEGPTSSSG. 9 ANK repeats span residues 24-53, 58-87, 91-120, 124-153, 167-197, 201-234, 238-268, 272-301, and 303-329; these read EDNH…NVNF, GGWT…DPVL, NGAT…DVNE, YGFT…NVNL, GGAT…DVNA, MGRN…DVNV, RGKT…EIND, DGKT…STDC, and DLVM…KEDF. 2 2-5A binding (P-loop) regions span residues 229-242 and 253-275; these read GADV…GKTP and GLVQ…DGKT. The 222-residue stretch at 365-586 folds into the Protein kinase domain; that stretch reads IDEKYKIADT…LSDLLGHPFF (222 aa). The segment at 395–444 adopts a C6-type; atypical zinc-finger fold; the sequence is CEGSPRAQREVSCLQSSRENSHLVTFYGSESHRGHLFVCVTLCEQTLEAC. One can recognise a KEN domain in the interval 589–723; the sequence is WESRYRTLRN…KHFPQTHSPN (135 aa). Residue Lys-684 is modified to N6-acetyllysine. The disordered stretch occupies residues 715-741; the sequence is HFPQTHSPNKPQCDGAGGASGLASPGC.

It belongs to the protein kinase superfamily. As to quaternary structure, monomer (inactive form) or homodimer. Interacts with ABCE1; this interaction inhibits the RNASEL. Requires Mn(2+) as cofactor. The cofactor is Mg(2+). Highly expressed in spleen and thymus followed by prostate, testis, uterus, small intestine, colon and peripheral blood leukocytes.

Its subcellular location is the cytoplasm. The protein localises to the mitochondrion. With respect to regulation, after binding to 2-5A (5'-phosphorylated 2',5'-linked oligoadenylates) the homodimerization and subsequent activation occurs. Inhibited by RNASEL inhibitor ABCE1/RLI, a cytoplasmic member of the ATP-binding cassette (ABC) transporter family. Functionally, endoribonuclease that functions in the interferon (IFN) antiviral response. In INF treated and virus infected cells, RNASEL probably mediates its antiviral effects through a combination of direct cleavage of single-stranded viral RNAs, inhibition of protein synthesis through the degradation of rRNA, induction of apoptosis, and induction of other antiviral genes. RNASEL mediated apoptosis is the result of a JNK-dependent stress-response pathway leading to cytochrome c release from mitochondria and caspase-dependent apoptosis. Therefore, activation of RNASEL could lead to elimination of virus infected cells under some circumstances. In the crosstalk between autophagy and apoptosis proposed to induce autophagy as an early stress response to small double-stranded RNA and at later stages of prolonged stress to activate caspase-dependent proteolytic cleavage of BECN1 to terminate autophagy and promote apoptosis. Might play a central role in the regulation of mRNA turnover. Cleaves 3' of UpNp dimers, with preference for UU and UA sequences, to sets of discrete products ranging from between 4 and 22 nucleotides in length. In Homo sapiens (Human), this protein is 2-5A-dependent ribonuclease (RNASEL).